The sequence spans 370 residues: tRNA N6-adenosine threonylcarbamoyltransferase (370 aa).

Fe cation-binding residues include histidine 122 and histidine 126. Residues 153–157, aspartate 186, glycine 199, and asparagine 298 each bind substrate; that span reads LLSGG. Aspartate 326 contributes to the Fe cation binding site.

Belongs to the KAE1 / TsaD family. Fe(2+) is required as a cofactor.

Its subcellular location is the cytoplasm. It carries out the reaction L-threonylcarbamoyladenylate + adenosine(37) in tRNA = N(6)-L-threonylcarbamoyladenosine(37) in tRNA + AMP + H(+). Required for the formation of a threonylcarbamoyl group on adenosine at position 37 (t(6)A37) in tRNAs that read codons beginning with adenine. Is involved in the transfer of the threonylcarbamoyl moiety of threonylcarbamoyl-AMP (TC-AMP) to the N6 group of A37, together with TsaE and TsaB. TsaD likely plays a direct catalytic role in this reaction. This chain is tRNA N6-adenosine threonylcarbamoyltransferase, found in Granulibacter bethesdensis (strain ATCC BAA-1260 / CGDNIH1).